A 339-amino-acid chain; its full sequence is Alcohol dehydrogenase (339 aa).

Zn(2+)-binding residues include Cys38, His61, Cys92, Cys95, Cys98, Cys106, and Cys148. Residues 172-177 (GIGGLG), Asp195, Lys200, 260-262 (VGL), and Arg331 each bind NAD(+).

It belongs to the zinc-containing alcohol dehydrogenase family. The cofactor is Zn(2+).

The catalysed reaction is a primary alcohol + NAD(+) = an aldehyde + NADH + H(+). The enzyme catalyses a secondary alcohol + NAD(+) = a ketone + NADH + H(+). With respect to regulation, the rate-limiting step is NADH release. Catabolite repression. Active with primary alcohols, including methanol. This Geobacillus stearothermophilus (Bacillus stearothermophilus) protein is Alcohol dehydrogenase (adh).